A 154-amino-acid polypeptide reads, in one-letter code: Myoglobin (154 aa).

One can recognise a Globin domain in the interval 2 to 148; that stretch reads GLSDGEWQLV…FRNDIAAKYK (147 aa). A Phosphoserine modification is found at S4. H65 lines the nitrite pocket. An O2-binding site is contributed by H65. Position 68 is a phosphothreonine (T68). H94 serves as a coordination point for heme b.

It belongs to the globin family. As to quaternary structure, monomeric.

The protein localises to the cytoplasm. Its subcellular location is the sarcoplasm. It catalyses the reaction Fe(III)-heme b-[protein] + nitric oxide + H2O = Fe(II)-heme b-[protein] + nitrite + 2 H(+). The enzyme catalyses H2O2 + AH2 = A + 2 H2O. Monomeric heme protein which primary function is to store oxygen and facilitate its diffusion within muscle tissues. Reversibly binds oxygen through a pentacoordinated heme iron and enables its timely and efficient release as needed during periods of heightened demand. Depending on the oxidative conditions of tissues and cells, and in addition to its ability to bind oxygen, it also has a nitrite reductase activity whereby it regulates the production of bioactive nitric oxide. Under stress conditions, like hypoxia and anoxia, it also protects cells against reactive oxygen species thanks to its pseudoperoxidase activity. This chain is Myoglobin (MB), found in Lagostomus maximus (Plains viscacha).